A 216-amino-acid chain; its full sequence is MPIGVPKVPYRIPGDEEATWVDLYNVMYRERTLFLGQEIRCEITNHITGLMVYLSIEDGISDIFLFINSPGGWLISGMAIFDTMQTVTPDIYTICLGIAASMASFILLGGEPAKRIAFPHARIMLHQPASAYYRARTPEFLLEVEELHKVREMITRVYALRTGKPFWVVSEDMERDVFMSADEAKAYGLVDIVGDEMIDKHCDTDPVWFPEMFKDW.

The active-site Nucleophile is the Ser-101. The active site involves His-126.

The protein belongs to the peptidase S14 family. Component of the chloroplastic Clp protease core complex.

The protein localises to the plastid. It is found in the chloroplast stroma. The catalysed reaction is Hydrolysis of proteins to small peptides in the presence of ATP and magnesium. alpha-casein is the usual test substrate. In the absence of ATP, only oligopeptides shorter than five residues are hydrolyzed (such as succinyl-Leu-Tyr-|-NHMec, and Leu-Tyr-Leu-|-Tyr-Trp, in which cleavage of the -Tyr-|-Leu- and -Tyr-|-Trp bonds also occurs).. In terms of biological role, cleaves peptides in various proteins in a process that requires ATP hydrolysis. Has a chymotrypsin-like activity. Plays a major role in the degradation of misfolded proteins. This is ATP-dependent Clp protease proteolytic subunit from Hordeum vulgare (Barley).